The following is a 132-amino-acid chain: Small ribosomal subunit protein uS11c (132 aa).

Belongs to the universal ribosomal protein uS11 family. Part of the 30S ribosomal subunit.

Its subcellular location is the plastid. The protein resides in the chloroplast. This Gnetum parvifolium (Small-leaved jointfir) protein is Small ribosomal subunit protein uS11c.